The following is a 423-amino-acid chain: Dihydroorotase (423 aa).

Zn(2+)-binding residues include His60 and His62. Residues 62–64 and Asn94 contribute to the substrate site; that span reads HFR. The Zn(2+) site is built by Asp151, His178, and His231. Asn277 is a binding site for substrate. Asp304 provides a ligand contact to Zn(2+). Asp304 is an active-site residue. His308 serves as a coordination point for substrate.

This sequence belongs to the metallo-dependent hydrolases superfamily. DHOase family. Class I DHOase subfamily. Zn(2+) serves as cofactor.

The enzyme catalyses (S)-dihydroorotate + H2O = N-carbamoyl-L-aspartate + H(+). It functions in the pathway pyrimidine metabolism; UMP biosynthesis via de novo pathway; (S)-dihydroorotate from bicarbonate: step 3/3. Functionally, catalyzes the reversible cyclization of carbamoyl aspartate to dihydroorotate. This is Dihydroorotase from Lactococcus lactis subsp. lactis (strain IL1403) (Streptococcus lactis).